The primary structure comprises 508 residues: Maturase K (508 aa).

It belongs to the intron maturase 2 family. MatK subfamily.

It localises to the plastid. The protein localises to the chloroplast. In terms of biological role, usually encoded in the trnK tRNA gene intron. Probably assists in splicing its own and other chloroplast group II introns. The sequence is that of Maturase K from Amburana cearensis (Cerejeira).